A 405-amino-acid chain; its full sequence is Phosphatidylinositol 5-phosphate 4-kinase type-2 alpha (405 aa).

N-acetylalanine is present on Ala2. The residue at position 3 (Thr3) is a Phosphothreonine. Ser14 carries the post-translational modification Phosphoserine. The PIPK domain maps to 33 to 405 (ASDPLLSVLM…RFLDFIGHIL (373 aa)). The required for interaction with PIP5K1A stretch occupies residues 59–65 (VMLMPDD). An N6-acetyllysine mark is found at Lys89 and Lys145. Residues 288–328 (QEEVECEENDGEEEGESDSTHPIGTPPDSPGNTLNSSPPLA) are disordered. Residues 289 to 304 (EEVECEENDGEEEGES) show a composition bias toward acidic residues.

Homodimer. Interacts with PIP4K2B; the interaction may regulate localization to the nucleus. Probably interacts with PIP5K1A; the interaction inhibits PIP5K1A kinase activity. Post-translationally, phosphorylated in tyrosines. Phosphorylation is induced by light and increases kinase activity. As to expression, detected in rod photoreceptor cells.

The protein resides in the cell membrane. It localises to the nucleus. Its subcellular location is the lysosome. The protein localises to the cytoplasm. It is found in the photoreceptor inner segment. The protein resides in the cell projection. It localises to the cilium. Its subcellular location is the photoreceptor outer segment. It carries out the reaction a 1,2-diacyl-sn-glycero-3-phospho-(1D-myo-inositol-5-phosphate) + ATP = a 1,2-diacyl-sn-glycero-3-phospho-(1D-myo-inositol-4,5-bisphosphate) + ADP + H(+). The catalysed reaction is 1,2-dihexadecanoyl-sn-glycero-3-phospho-(1D-myo-inositol-5-phosphate) + ATP = 1,2-dihexadecanoyl-sn-glycero-3-phospho-(1D-myo-inositol-4,5-bisphosphate) + ADP + H(+). The enzyme catalyses 1,2-dihexadecanoyl-sn-glycero-3-phospho-(1D-myo-inositol-5-phosphate) + GTP = 1,2-dihexadecanoyl-sn-glycero-3-phospho-(1D-myo-inositol-4,5-bisphosphate) + GDP + H(+). With respect to regulation, in rod outer segments, activated by light. Functionally, catalyzes the phosphorylation of phosphatidylinositol 5-phosphate (PtdIns5P) on the fourth hydroxyl of the myo-inositol ring, to form phosphatidylinositol 4,5-bisphosphate (PtdIns(4,5)P2). Has both ATP- and GTP-dependent kinase activities. May exert its function by regulating the levels of PtdIns5P, which functions in the cytosol by increasing AKT activity and in the nucleus signals through ING2. May regulate the pool of cytosolic PtdIns5P in response to the activation of tyrosine phosphorylation. Required for lysosome-peroxisome membrane contacts and intracellular cholesterol transport through modulating peroxisomal PtdIns(4,5)P2 level. In collaboration with PIP4K2B, has a role in mediating autophagy in times of nutrient stress. Required for autophagosome-lysosome fusion and the regulation of cellular lipid metabolism. Negatively regulates insulin signaling through a catalytic-independent mechanism. PIP4Ks interact with PIP5Ks and suppress PIP5K-mediated PtdIns(4,5)P2 synthesis and insulin-dependent conversion to PtdIns(3,4,5)P3. May be involved in thrombopoiesis, and the terminal maturation of megakaryocytes and regulation of their size. The protein is Phosphatidylinositol 5-phosphate 4-kinase type-2 alpha of Mus musculus (Mouse).